We begin with the raw amino-acid sequence, 330 residues long: o-succinylbenzoate synthase (330 aa).

The active-site Proton donor is the K130. Residues D155, E184, and D206 each coordinate Mg(2+). The active-site Proton acceptor is the K228.

Belongs to the mandelate racemase/muconate lactonizing enzyme family. MenC type 1 subfamily. Monomer. The cofactor is a divalent metal cation.

The enzyme catalyses (1R,6R)-6-hydroxy-2-succinyl-cyclohexa-2,4-diene-1-carboxylate = 2-succinylbenzoate + H2O. Its pathway is quinol/quinone metabolism; 1,4-dihydroxy-2-naphthoate biosynthesis; 1,4-dihydroxy-2-naphthoate from chorismate: step 4/7. It participates in cofactor biosynthesis; phylloquinone biosynthesis. Functionally, converts 2-succinyl-6-hydroxy-2,4-cyclohexadiene-1-carboxylate (SHCHC) to 2-succinylbenzoate (OSB). Does not show N-succinylamino acid racemase (NSAR) activity with N-succinyl-L-phenylglycine as substrate. The polypeptide is o-succinylbenzoate synthase (Bdellovibrio bacteriovorus (strain ATCC 15356 / DSM 50701 / NCIMB 9529 / HD100)).